The following is a 144-amino-acid chain: Small ribosomal subunit protein bS16 (144 aa).

The tract at residues 115–144 is disordered; the sequence is NEPVAEAVTPKKKAKKDDAAAESTEAEAAE.

It belongs to the bacterial ribosomal protein bS16 family.

The protein is Small ribosomal subunit protein bS16 of Nocardia farcinica (strain IFM 10152).